We begin with the raw amino-acid sequence, 267 residues long: Expansin-B1 (267 aa).

A signal peptide spans 1–22 (MASSSLLLACVVVAAMVSAVSC). Asparagine 32 carries N-linked (GlcNAc...) asparagine glycosylation. Residues 61 to 167 (GGACGYKDVD…RRVKCKYPAD (107 aa)) form the Expansin-like EG45 domain. Cystine bridges form between cysteine 64/cysteine 92, cysteine 95/cysteine 162, and cysteine 100/cysteine 106. The 82-residue stretch at 181–262 (NYLALLVKYV…GWKADSVYKS (82 aa)) folds into the Expansin-like CBD domain.

The protein belongs to the expansin family. Expansin B subfamily. Expressed in mature anthers but not in vegetative or other floral tissues.

Its subcellular location is the secreted. It localises to the cell wall. The protein resides in the membrane. May cause loosening and extension of plant cell walls by disrupting non-covalent bonding between cellulose microfibrils and matrix glucans. No enzymatic activity has been found. May be required for rapid internodal elongation in deepwater rice during submergence. This Oryza sativa subsp. japonica (Rice) protein is Expansin-B1 (EXPB1a).